A 338-amino-acid chain; its full sequence is D-erythrose-4-phosphate dehydrogenase (338 aa).

11-12 (RI) contributes to the NAD(+) binding site. Residues 153-155 (SCT), Arg-199, 212-213 (TK), and Arg-235 contribute to the substrate site. The Nucleophile role is filled by Cys-154. Asn-317 is a binding site for NAD(+).

This sequence belongs to the glyceraldehyde-3-phosphate dehydrogenase family. Epd subfamily. In terms of assembly, homotetramer.

The protein resides in the cytoplasm. It carries out the reaction D-erythrose 4-phosphate + NAD(+) + H2O = 4-phospho-D-erythronate + NADH + 2 H(+). It functions in the pathway cofactor biosynthesis; pyridoxine 5'-phosphate biosynthesis; pyridoxine 5'-phosphate from D-erythrose 4-phosphate: step 1/5. Catalyzes the NAD-dependent conversion of D-erythrose 4-phosphate to 4-phosphoerythronate. This chain is D-erythrose-4-phosphate dehydrogenase, found in Shewanella piezotolerans (strain WP3 / JCM 13877).